The primary structure comprises 701 residues: Polyphosphate kinase (701 aa).

N45 provides a ligand contact to ATP. 2 residues coordinate Mg(2+): R373 and R403. The PLD phosphodiesterase 1 domain maps to 428 to 462 (PGMKIHAKLLLITRKEGDEFVRYAHIGTGNFHERT). H433 acts as the Phosphohistidine intermediate in catalysis. ATP contacts are provided by Y466, R562, and H590. In terms of domain architecture, PLD phosphodiesterase 2 spans 585–615 (DRFLEHPRVLVVHNDGNPQVFISSADWMERN).

It belongs to the polyphosphate kinase 1 (PPK1) family. Mg(2+) is required as a cofactor. Post-translationally, an intermediate of this reaction is the autophosphorylated ppk in which a phosphate is covalently linked to a histidine residue through a N-P bond.

It catalyses the reaction [phosphate](n) + ATP = [phosphate](n+1) + ADP. Catalyzes the reversible transfer of the terminal phosphate of ATP to form a long-chain polyphosphate (polyP). The polypeptide is Polyphosphate kinase (Vibrio cholerae serotype O1 (strain ATCC 39315 / El Tor Inaba N16961)).